The sequence spans 1125 residues: MADLSLVDALTEPPPEIEGEIKRDFMAALEAEPYDDIVGETVEKTEFIPLLDGDEKTGNSESKKKPCLDTSQVEGIPSSKPTLLANGDHGMEGNNTAGSPTDFLEERVDYPDYQSSQNWPEDASFCFQPQQVLDTDQAEPFNEHRDDGLADLLFVSSGPTNASAFTERDNPSEDSYGMLPCDSFASTAVVSQEWSVGAPNSPCSESCVSPEVTIETLQPATELSKAAEVESVKEQLPAKALETMAEQTTDVVHSPSTDTTPGPDTEAALAKDIEEITKPDVILANVTQPSTESDMFLAQDMELLTGTEAAHANNIILPTEPDESSTKDVAPPMEEEIVPGNDTTSPKETETTLPIKMDLAPPEDVLLTKETELAPAKGMVSLSEIEEALAKNDESSAEIPVAQETVVSETEVVLATEVVLPSDPITTLTKDVTLPLEAERPLVTDMTPSLETEMTLGKETAPPTETNLGMAKDMSPLPESEVTLGKDVVILPETKVAEFNNVTPLSEEEVTSVKDMSPSAETEAPLAKNADLHSGTELIVDNSMAPASDLALPLETKVATVPIKDKGTVQTEEKPREDSQLASMQHKGQSTVPPCTASPEPVKAAEQMSTLPIDAPSPLENLEQKETPGSQPSEPCSGVSRQEEAKAAVGVTGNDITTPPNKEPPPSPEKKAKPLATTQPAKTSTSKAKTQPTSLPKQPAPTTSGGLNKKPMSLASGSVPAAPHKRPAAATATARPSTLPARDVKPKPITEAKVAEKRTSPSKPSSAPALKPGPKTTPTVSKATSPSTLVSTGPSSRSPATTLPKRPTSIKTEGKPADVKRMTAKSASADLSRSKTTSASSVKRNTTPTGAAPPAGMTSTRVKPMSAPSRSSGALSVDKKPTSTKPSSSAPRVSRLATTVSAPDLKSVRSKVGSTENIKHQPGGGRAKVEKKTEAATTAGKPEPNAVTKAAGSIASAQKPPAGKVQIVSKKVSYSHIQSKCGSKDNIKHVPGGGNVQIQNKKVDISKVSSKCGSKANIKHKPGGGDVKIESQKLNFKEKAQAKVGSLDNVGHLPAGGAVKTEGGGSEALPCPGPPAGEEPVIPEAAPDAGAPTSASGLSGHTTLSGGGDQREPQTLDSQIQETSI.

The residue at position 2 (Ala-2) is an N-acetylalanine. Phosphoserine occurs at positions 5, 60, 99, and 254. 2 disordered regions span residues 49–103 (PLLD…PTDF) and 245–265 (AEQT…GPDT). A compositionally biased stretch (basic and acidic residues) spans 53 to 67 (GDEKTGNSESKKKPC). Low complexity predominate over residues 254 to 265 (SPSTDTTPGPDT). 2 positions are modified to phosphothreonine: Thr-260 and Thr-277. A disordered region spans residues 315 to 361 (IILPTEPDESSTKDVAPPMEEEIVPGNDTTSPKETETTLPIKMDLAP). Met-333 and Glu-334 each carry phosphoserine. Thr-349 bears the Phosphothreonine mark. Position 381 is a phosphoserine (Ser-381). A phosphothreonine mark is found at Thr-410 and Thr-447. The segment at 455 to 478 (TLGKETAPPTETNLGMAKDMSPLP) is disordered. Ser-475 is subject to Phosphoserine. Thr-494 and Thr-503 each carry phosphothreonine. Ser-506 is modified (phosphoserine). Disordered stretches follow at residues 508 to 529 (EEVT…LAKN) and 563 to 964 (IKDK…PAGK). Thr-511 is subject to Phosphothreonine. Residues Ser-512, Ser-517, and Ser-519 each carry the phosphoserine modification. Residues 563–579 (IKDKGTVQTEEKPREDS) show a composition bias toward basic and acidic residues. Residues 580-593 (QLASMQHKGQSTVP) show a composition bias toward polar residues. A phosphoserine mark is found at Ser-598 and Ser-617. Thr-658 is modified (phosphothreonine). Residues Ser-667, Ser-684, and Ser-694 each carry the phosphoserine modification. Positions 676-706 (ATTQPAKTSTSKAKTQPTSLPKQPAPTTSGG) are enriched in polar residues. The span at 728-741 (AAATATARPSTLPA) shows a compositional bias: low complexity. The segment covering 742 to 759 (RDVKPKPITEAKVAEKRT) has biased composition (basic and acidic residues). Ser-760 carries the post-translational modification Phosphoserine. Low complexity predominate over residues 761-774 (PSKPSSAPALKPGP). A compositionally biased stretch (polar residues) spans 776–801 (TTPTVSKATSPSTLVSTGPSSRSPAT). Ser-798 carries the post-translational modification Phosphoserine. A Glycyl lysine isopeptide (Lys-Gly) (interchain with G-Cter in SUMO2) cross-link involves residue Lys-811. Basic and acidic residues predominate over residues 812–821 (TEGKPADVKR). Positions 825-849 (KSASADLSRSKTTSASSVKRNTTPT) are enriched in polar residues. A phosphoserine mark is found at Ser-826, Ser-901, and Ser-914. 4 Tau/MAP repeats span residues 896–926 (LATT…GGGR), 965–995 (VQIV…GGGN), 996–1026 (VQIQ…GGGD), and 1027–1058 (VKIE…AGGA). Thr-915 carries the phosphothreonine modification. Ser-973 carries the phosphoserine modification. Position 1046 is a phosphoserine (Ser-1046). Residues 1047 to 1125 (LDNVGHLPAG…LDSQIQETSI (79 aa)) are disordered. Positions 1093–1104 (TSASGLSGHTTL) are enriched in low complexity. The span at 1115–1125 (TLDSQIQETSI) shows a compositional bias: polar residues. Ser-1118 and Ser-1124 each carry phosphoserine.

In terms of assembly, interacts with SEPTIN2; this interaction impedes tubulin-binding. Interacts with TRAF3IP1. Interacts with KNSTRN. Phosphorylated at serine residues in K-X-G-S motifs by MAP/microtubule affinity-regulating kinase (MARK1 or MARK2), causing detachment from microtubules, and their disassembly. Phosphorylation on Ser-760 negatively regulates MAP4 activity to promote microtubule assembly. Isoform 4 is phosphorylated on Ser-333 and Ser-334. In terms of tissue distribution, testis, striated and cardiac muscle.

It localises to the cytoplasm. It is found in the cytoskeleton. The protein localises to the microtubule organizing center. Non-neuronal microtubule-associated protein. Promotes microtubule assembly. This Mus musculus (Mouse) protein is Microtubule-associated protein 4 (Map4).